The following is a 409-amino-acid chain: MAREKFERKKQHVNIGTIGHVDHGKTTLTAAITMCLQSFSKNKGKRYDEIDSAPEEKARGITINTAHVEYETENRHYAHVDCPGHADYVKNMITGAAQMDGAILVVSGADGPMPQTKEHLLLAKQVGVPTLVVFLNKEDQVDDPELLELVELEVRETLDKYEYPGDDIPIIAGSALLALEALIENPNVKPGENEWVDKILKLMQNVDTYIPTPVRETDKTFLMAVEDVFSITGRGTVATGLVERGTLKTGATVEIIGLRDTTTTTVTGLEMFQKTLDETVAGDNVGVLLRGVQKDNIQRGMVLAAPGTIKPHTKFEAQVYILTKEEGGRHTPFFPGYRPQFYVRTTDVTGKIESFTADDGSEALMATSGDRLKMVVELIQPIAVENGMRFAIREGGRTVGAGVVSTILK.

Residues 10–214 (KQHVNIGTIG…NVDTYIPTPV (205 aa)) form the tr-type G domain. Positions 19–26 (GHVDHGKT) are G1. 19 to 26 (GHVDHGKT) contributes to the GTP binding site. Residue Thr26 participates in Mg(2+) binding. The segment at 60 to 64 (GITIN) is G2. Positions 81–84 (DCPG) are G3. GTP-binding positions include 81 to 85 (DCPGH) and 136 to 139 (NKED). The segment at 136–139 (NKED) is G4. Positions 174-176 (SAL) are G5.

It belongs to the TRAFAC class translation factor GTPase superfamily. Classic translation factor GTPase family. EF-Tu/EF-1A subfamily.

It localises to the plastid. Its subcellular location is the chloroplast. It catalyses the reaction GTP + H2O = GDP + phosphate + H(+). Its function is as follows. GTP hydrolase that promotes the GTP-dependent binding of aminoacyl-tRNA to the A-site of ribosomes during protein biosynthesis. This is Elongation factor Tu, chloroplastic (tufA) from Tupiella akineta (Green alga).